Here is a 329-residue protein sequence, read N- to C-terminus: ATP phosphoribosyltransferase regulatory subunit (329 aa).

It belongs to the class-II aminoacyl-tRNA synthetase family. HisZ subfamily. In terms of assembly, heteromultimer composed of HisG and HisZ subunits.

The protein resides in the cytoplasm. It participates in amino-acid biosynthesis; L-histidine biosynthesis; L-histidine from 5-phospho-alpha-D-ribose 1-diphosphate: step 1/9. In terms of biological role, required for the first step of histidine biosynthesis. May allow the feedback regulation of ATP phosphoribosyltransferase activity by histidine. This is ATP phosphoribosyltransferase regulatory subunit from Streptococcus gordonii (strain Challis / ATCC 35105 / BCRC 15272 / CH1 / DL1 / V288).